Here is a 255-residue protein sequence, read N- to C-terminus: F-box/SPRY domain-containing protein 1 (255 aa).

One can recognise an F-box domain in the interval 3-51; sequence DRVAALCNYNVLEVVFSYLDLNDLGRCSQVCKSWFHFLNDENSDVWRFH. The region spanning 61–253 is the B30.2/SPRY domain; that stretch reads TKSELLSPVP…VSMVYCGTPL (193 aa).

It belongs to the FBXO45/Fsn family. Component of an E3 ubiquitin ligase complex composed of hiw and Fsn.

It localises to the synapse. It participates in protein modification; protein ubiquitination. Functionally, required in the presynaptic motoneuron to down-regulate the levels of wnd and restrain synaptic terminal growth at the neuromuscular junction (NMJ). In Drosophila persimilis (Fruit fly), this protein is F-box/SPRY domain-containing protein 1.